Reading from the N-terminus, the 180-residue chain is Ribosome-recycling factor (180 aa).

The protein belongs to the RRF family.

It localises to the cytoplasm. Functionally, responsible for the release of ribosomes from messenger RNA at the termination of protein biosynthesis. May increase the efficiency of translation by recycling ribosomes from one round of translation to another. This is Ribosome-recycling factor from Chlamydia abortus (strain DSM 27085 / S26/3) (Chlamydophila abortus).